The following is a 622-amino-acid chain: Presenilin-A (622 aa).

Basic and acidic residues predominate over residues 1–16 (MKENEDEINKTDEKYK). Disordered stretches follow at residues 1–65 (MKEN…NLEN) and 132–160 (VSEQ…DETE). The Cytoplasmic portion of the chain corresponds to 1 to 168 (MKENEDEINK…TEVPELVDYS (168 aa)). Over residues 21-62 (SNNGNNKNKNNNNNNNNNNNNNNNNNNNNNNNNNNNNNGNSN) the composition is skewed to low complexity. The span at 147–160 (DLDEDDDDDDDETE) shows a compositional bias: acidic residues. A helical transmembrane segment spans residues 169–189 (EMIVSILYPVCITMVIVVLAI). At 190–227 (RAISSSTSKNSQIVEISNDNSGGNGDSSSGADKMVFDS) the chain is on the lumenal side. A helical membrane pass occupies residues 228-248 (VVNSLIFLAVIILSTTIMVVL). Over 249 to 265 (YKFKLMKALYAWLMGTS) the chain is Cytoplasmic. A helical membrane pass occupies residues 266 to 286 (ILLLGVFGGFLFLILLAYLNL). Over 287–289 (GLD) the chain is Lumenal. Residues 290–310 (YVTFVIVVWNFSVGGIVCIFW) form a helical membrane-spanning segment. Residue Y311 is a topological domain, cytoplasmic. The helical transmembrane segment at 312–332 (SPKLLNQGYLISISVLMALFF) threads the bilayer. Topologically, residues 333 to 341 (SRLPDWTTW) are lumenal. A helical membrane pass occupies residues 342–362 (GILSIVSIYDIFAVLCPGGPL). D351 is a catalytic residue. The Cytoplasmic segment spans residues 363–538 (RILIETAQKR…SYVKPKQSIR (176 aa)). The segment at 419 to 477 (NNNNNEDENKNNTEDGNNNNNKNKNNNNNNNNRIENENGAENSSENGSITPPPTIPNFI) is disordered. Over residues 432–466 (EDGNNNNNKNKNNNNNNNNRIENENGAENSSENGS) the composition is skewed to low complexity. Residues 539 to 559 (LGLGDFVFYSVLIGKAASYQI) form a helical membrane-spanning segment. D543 is an active-site residue. Topologically, residues 560-562 (TTV) are lumenal. The chain crosses the membrane as a helical span at residues 563-583 (FTVFIAIITGLFLTLILLAVF). At 584–588 (RRALP) the chain is on the cytoplasmic side. Positions 588–590 (PAL) match the PAL motif. An intramembrane region (helical) is located at residues 589 to 609 (ALPMSIIFGIIVFFLTFKILI). The Cytoplasmic segment spans residues 610-622 (QYIYFLGENQIFV).

It belongs to the peptidase A22A family. Homodimer. Component of the gamma-secretase complex, a complex composed of a presenilin homodimer, nicastrin, aph1 and pen2.

The protein resides in the endoplasmic reticulum membrane. It localises to the golgi apparatus membrane. In terms of biological role, probable catalytic subunit of the gamma-secretase complex, an endoprotease complex that catalyzes the intramembrane cleavage of integral membrane proteins such as Notch receptors. Requires the other members of the gamma-secretase complex to have a protease activity. The polypeptide is Presenilin-A (psenA) (Dictyostelium discoideum (Social amoeba)).